The chain runs to 229 residues: Ribonuclease T (229 aa).

Positions 23 to 197 constitute an Exonuclease domain; sequence VIIDVETAGF…YDTERTAKLF (175 aa). Mg(2+) is bound by residues Asp-26, Glu-28, His-184, and Asp-189. Catalysis depends on His-184, which acts as the Proton donor/acceptor.

It belongs to the RNase T family. Homodimer. Requires Mg(2+) as cofactor.

Functionally, trims short 3' overhangs of a variety of RNA species, leaving a one or two nucleotide 3' overhang. Responsible for the end-turnover of tRNA: specifically removes the terminal AMP residue from uncharged tRNA (tRNA-C-C-A). Also appears to be involved in tRNA biosynthesis. The chain is Ribonuclease T from Haemophilus influenzae (strain PittGG).